An 86-amino-acid chain; its full sequence is Putative membrane protein insertion efficiency factor (86 aa).

It belongs to the UPF0161 family.

The protein localises to the cell inner membrane. Functionally, could be involved in insertion of integral membrane proteins into the membrane. In Pseudomonas aeruginosa (strain LESB58), this protein is Putative membrane protein insertion efficiency factor.